The following is a 2912-amino-acid chain: MGRRRRLCLQLYFLWLGCVVLWAQGTAGQPQPPPPKPPRPQPPPQQVRSATAGSEGGFLAPEYREEGAAVASRVRRRGQQDVLRGPNVCGSRFHSYCCPGWKTLPGGNQCIVPICRNSCGDGFCSRPNMCTCSSGQISSTCGSKSIQQCSVRCMNGGTCADDHCQCQKGYIGTYCGQPVCENGCQNGGRCIGPNRCACVYGFTGPQCERDYRTGPCFTQVNNQMCQGQLTGIVCTKTLCCATIGRAWGHPCEMCPAQPQPCRRGFIPNIRTGACQDVDECQAIPGICQGGNCINTVGSFECRCPAGHKQSETTQKCEDIDECSIIPGICETGECSNTVGSYFCVCPRGYVTSTDGSRCIDQRTGMCFSGLVNGRCAQELPGRMTKMQCCCEPGRCWGIGTIPEACPVRGSEEYRRLCMDGLPMGGIPGSAGSRPGGTGGNGFAPSGNGNGYGPGGTGFIPIPGGNGFSPGVGGAGVGAGGQGPIITGLTILNQTIDICKHHANLCLNGRCIPTVSSYRCECNMGYKQDANGDCIDVDECTSNPCTNGDCVNTPGSYYCKCHAGFQRTPTKQACIDIDECIQNGVLCKNGRCVNTDGSFQCICNAGFELTTDGKNCVDHDECTTTNMCLNGMCINEDGSFKCICKPGFVLAPNGRYCTDVDECQTPGICMNGHCINSEGSFRCDCPPGLAVGMDGRVCVDTHMRSTCYGGIKKGVCVRPFPGAVTKSECCCANPDYGFGEPCQPCPAKNSAEFHGLCSSGVGITVDGRDINECALDPDICANGICENLRGSYRCNCNSGYEPDASGRNCIDIDECLVNRLLCDNGLCRNTPGSYSCTCPPGYVFRTETETCEDINECESNPCVNGACRNNLGSFNCECSPGSKLSSTGLICIDSLKGTCWLNIQDSRCEVNINGATLKSECCATLGAAWGSPCERCELDTACPRGLARIKGVTCEDVNECEVFPGVCPNGRCVNSKGSFHCECPEGLTLDGTGRVCLDIRMEQCYLKWDEDECIHPVPGKFRMDACCCAVGAAWGTECEECPKPGTKEYETLCPRGAGFANRGDVLTGRPFYKDINECKAFPGMCTYGKCRNTIGSFKCRCNSGFALDMEERNCTDIDECRISPDLCGSGICVNTPGSFECECFEGYESGFMMMKNCMDIDECERNPLLCRGGTCVNTEGSFQCDCPLGHELSPSREDCVDINECSLSDNLCRNGKCVNMIGTYQCSCNPGYQATPDRQGCTDIDECMIMNGGCDTQCTNSEGSYECSCSEGYALMPDGRSCADIDECENNPDICDGGQCTNIPGEYRCLCYDGFMASMDMKTCIDVNECDLNSNICMFGECENTKGSFICHCQLGYSVKKGTTGCTDVDECEIGAHNCDMHASCLNIPGSFKCSCREGWIGNGIKCIDLDECSNGTHQCSINAQCVNTPGSYRCACSEGFTGDGFTCSDVDECAENINLCENGQCLNVPGAYRCECEMGFTPASDSRSCQDIDECSFQNICVFGTCNNLPGMFHCICDDGYELDRTGGNCTDIDECADPINCVNGLCVNTPGRYECNCPPDFQLNPTGVGCVDNRVGNCYLKFGPRGDGSLSCNTEIGVGVSRSSCCCSLGKAWGNPCETCPPVNSTEYYTLCPGGEGFRPNPITIILEDIDECQELPGLCQGGNCINTFGSFQCECPQGYYLSEDTRICEDIDECFAHPGVCGPGTCYNTLGNYTCICPPEYMQVNGGHNCMDMRKSFCYRSYNGTTCENELPFNVTKRMCCCTYNVGKAWNKPCEPCPTPGTADFKTICGNIPGFTFDIHTGKAVDIDECKEIPGICANGVCINQIGSFRCECPTGFSYNDLLLVCEDIDECSNGDNLCQRNADCINSPGSYRCECAAGFKLSPNGACVDRNECLEIPNVCSHGLCVDLQGSYQCICHNGFKASQDQTMCMDVDECERHPCGNGTCKNTVGSYNCLCYPGFELTHNNDCLDIDECSSFFGQVCRNGRCFNEIGSFKCLCNEGYELTPDGKNCIDTNECVALPGSCSPGTCQNLEGSFRCICPPGYEVKSENCIDINECDEDPNICLFGSCTNTPGGFQCLCPPGFVLSDNGRRCFDTRQSFCFTNFENGKCSVPKAFNTTKAKCCCSKMPGEGWGDPCELCPKDDEVAFQDLCPYGHGTVPSLHDTREDVNECLESPGICSNGQCINTDGSFRCECPMGYNLDYTGVRCVDTDECSIGNPCGNGTCTNVIGSFECNCNEGFEPGPMMNCEDINECAQNPLLCAFRCMNTFGSYECTCPIGYALREDQKMCKDLDECAEGLHDCESRGMMCKNLIGTFMCICPPGMARRPDGEGCVDENECRTKPGICENGRCVNIIGSYRCECNEGFQSSSSGTECLDNRQGLCFAEVLQTICQMASSSRNLVTKSECCCDGGRGWGHQCELCPLPGTAQYKKICPHGPGYTTDGRDIDECKVMPNLCTNGQCINTMGSFRCFCKVGYTTDISGTSCIDLDECSQSPKPCNYICKNTEGSYQCSCPRGYVLQEDGKTCKDLDECQTKQHNCQFLCVNTLGGFTCKCPPGFTQHHTACIDNNECGSQPSLCGAKGICQNTPGSFSCECQRGFSLDATGLNCEDVDECDGNHRCQHGCQNILGGYRCGCPQGYIQHYQWNQCVDENECSNPNACGSASCYNTLGSYKCACPSGFSFDQFSSACHDVNECSSSKNPCNYGCSNTEGGYLCGCPPGYYRVGQGHCVSGMGFNKGQYLSLDTEVDEENALSPEACYECKINGYSKKDSRQKRSIHEPDPTAVEQISLESVDMDSPVNMKFNLSHLGSKEHILELRPAIQPLNNHIRYVISQGNDDSVFRIHQRNGLSYLHTAKKKLMPGTYTLEITSIPLYKKKELKKLEESNEDDYLLGELGEALRMRLQIQLY.

A signal peptide spans 1–28 (MGRRRRLCLQLYFLWLGCVVLWAQGTAG). The segment at 27–52 (AGQPQPPPPKPPRPQPPPQQVRSATA) is disordered. The propeptide occupies 29-77 (QPQPPPPKPPRPQPPPQQVRSATAGSEGGFLAPEYREEGAAVASRVRRR). Over residues 30 to 45 (PQPPPPKPPRPQPPPQ) the composition is skewed to pro residues. 3 EGF-like domains span residues 111-142 (IVPI…STCG), 145-176 (SIQQ…TYCG), and 176-208 (GQPV…PQCE). Cystine bridges form between Cys115–Cys124, Cys119–Cys130, Cys132–Cys141, Cys149–Cys159, Cys153–Cys164, Cys166–Cys175, Cys180–Cys190, Cys184–Cys196, and Cys198–Cys207. Residues 149–359 (CSVRCMNGGT…VTSTDGSRCI (211 aa)) are interaction with MFAP4. A TB 1 domain is found at 214-266 (GPCFTQVNNQMCQGQLTGIVCTKTLCCATIGRAWGHPCEMCPAQPQPCRRGFI). Residues 276-317 (DVDECQAIPGICQGGNCINTVGSFECRCPAGHKQSETTQKCE) form the EGF-like 4; calcium-binding domain. 6 cysteine pairs are disulfide-bonded: Cys280/Cys292, Cys287/Cys301, Cys303/Cys316, Cys322/Cys334, Cys329/Cys343, and Cys345/Cys358. Ser298 carries an O-linked (Glc) serine glycan. Residues 318 to 359 (DIDECSIIPGICETGECSNTVGSYFCVCPRGYVTSTDGSRCI) enclose the EGF-like 5; calcium-binding domain. A glycan (O-linked (Glc) serine) is linked at Ser340. A TB 2 domain is found at 364–417 (GMCFSGLVNGRCAQELPGRMTKMQCCCEPGRCWGIGTIPEACPVRGSEEYRRLC). A glycan (N-linked (GlcNAc...) asparagine) is linked at Asn492. Positions 494 to 534 (TIDICKHHANLCLNGRCIPTVSSYRCECNMGYKQDANGDCI) constitute an EGF-like 6 domain. Intrachain disulfides connect Cys498-Cys510, Cys505-Cys519, Cys521-Cys533, Cys539-Cys549, Cys544-Cys558, Cys560-Cys573, Cys579-Cys591, Cys586-Cys600, Cys602-Cys615, Cys621-Cys632, Cys627-Cys641, Cys643-Cys656, Cys662-Cys673, Cys668-Cys682, and Cys684-Cys697. A glycan (O-linked (Glc) serine) is linked at Ser516. Residues 535–574 (DVDECTSNPCTNGDCVNTPGSYYCKCHAGFQRTPTKQACI) enclose the EGF-like 7; calcium-binding domain. An O-linked (Glc) serine glycan is attached at Ser555. The 42-residue stretch at 575 to 616 (DIDECIQNGVLCKNGRCVNTDGSFQCICNAGFELTTDGKNCV) folds into the EGF-like 8; calcium-binding domain. The O-linked (Glc) serine glycan is linked to Ser597. The EGF-like 9; calcium-binding domain occupies 617-657 (DHDECTTTNMCLNGMCINEDGSFKCICKPGFVLAPNGRYCT). O-linked (Glc) serine glycosylation occurs at Ser638. The EGF-like 10; calcium-binding domain occupies 658–698 (DVDECQTPGICMNGHCINSEGSFRCDCPPGLAVGMDGRVCV). O-linked (Glc) serine glycosylation is present at Ser679. The 53-residue stretch at 704 to 756 (STCYGGIKKGVCVRPFPGAVTKSECCCANPDYGFGEPCQPCPAKNSAEFHGLC) folds into the TB 3 domain. An EGF-like 11; calcium-binding domain is found at 768-809 (DINECALDPDICANGICENLRGSYRCNCNSGYEPDASGRNCI). 9 disulfides stabilise this stretch: Cys772-Cys784, Cys779-Cys793, Cys795-Cys808, Cys814-Cys826, Cys821-Cys835, Cys837-Cys850, Cys856-Cys866, Cys861-Cys875, and Cys877-Cys890. The region spanning 810 to 851 (DIDECLVNRLLCDNGLCRNTPGSYSCTCPPGYVFRTETETCE) is the EGF-like 12; calcium-binding domain. The O-linked (Glc) serine glycan is linked to Ser832. An EGF-like 13; calcium-binding domain is found at 852-891 (DINECESNPCVNGACRNNLGSFNCECSPGSKLSSTGLICI). The O-linked (Glc) serine glycan is linked to Ser872. The TB 4 domain maps to 896 to 947 (GTCWLNIQDSRCEVNINGATLKSECCATLGAAWGSPCERCELDTACPRGLAR). An EGF-like 14; calcium-binding domain is found at 955–996 (DVNECEVFPGVCPNGRCVNSKGSFHCECPEGLTLDGTGRVCL). Disulfide bonds link Cys959-Cys971, Cys966-Cys980, and Cys982-Cys995. The O-linked (Glc) serine glycan is linked to Ser977. One can recognise a TB 5 domain in the interval 1001–1052 (EQCYLKWDEDECIHPVPGKFRMDACCCAVGAAWGTECEECPKPGTKEYETLC). The region spanning 1073-1114 (DINECKAFPGMCTYGKCRNTIGSFKCRCNSGFALDMEERNCT) is the EGF-like 15; calcium-binding domain. 36 disulfide bridges follow: Cys1077–Cys1089, Cys1084–Cys1098, Cys1100–Cys1113, Cys1119–Cys1131, Cys1126–Cys1140, Cys1142–Cys1156, Cys1162–Cys1174, Cys1169–Cys1183, Cys1185–Cys1198, Cys1204–Cys1216, Cys1211–Cys1225, Cys1227–Cys1240, Cys1246–Cys1257, Cys1253–Cys1266, Cys1268–Cys1281, Cys1287–Cys1299, Cys1294–Cys1308, Cys1310–Cys1323, Cys1329–Cys1341, Cys1336–Cys1350, Cys1352–Cys1365, Cys1371–Cys1384, Cys1378–Cys1393, Cys1395–Cys1406, Cys1412–Cys1425, Cys1419–Cys1434, Cys1436–Cys1447, Cys1453–Cys1465, Cys1460–Cys1474, Cys1476–Cys1489, Cys1495–Cys1506, Cys1501–Cys1515, Cys1517–Cys1530, Cys1536–Cys1547, Cys1542–Cys1556, and Cys1558–Cys1571. Ser1095 carries an O-linked (Glc) serine glycan. A glycan (N-linked (GlcNAc...) asparagine) is linked at Asn1112. Residues 1115 to 1157 (DIDECRISPDLCGSGICVNTPGSFECECFEGYESGFMMMKNCM) form the EGF-like 16; calcium-binding domain. One can recognise an EGF-like 17; calcium-binding domain in the interval 1158–1199 (DIDECERNPLLCRGGTCVNTEGSFQCDCPLGHELSPSREDCV). An O-linked (Glc) serine glycan is attached at Ser1180. The 42-residue stretch at 1200–1241 (DINECSLSDNLCRNGKCVNMIGTYQCSCNPGYQATPDRQGCT) folds into the EGF-like 18; calcium-binding domain. Thr1222 is a glycosylation site (O-linked (Glc) threonine). The EGF-like 19; calcium-binding domain maps to 1242–1282 (DIDECMIMNGGCDTQCTNSEGSYECSCSEGYALMPDGRSCA). A glycan (O-linked (Glc) serine) is linked at Ser1263. Residues 1283–1324 (DIDECENNPDICDGGQCTNIPGEYRCLCYDGFMASMDMKTCI) form the EGF-like 20; calcium-binding domain. Residues 1325-1366 (DVNECDLNSNICMFGECENTKGSFICHCQLGYSVKKGTTGCT) form the EGF-like 21; calcium-binding domain. A glycan (O-linked (Glc) serine) is linked at Ser1347. The EGF-like 22; calcium-binding domain occupies 1367–1407 (DVDECEIGAHNCDMHASCLNIPGSFKCSCREGWIGNGIKCI). An O-linked (Glc) serine glycan is attached at Ser1390. Positions 1408-1448 (DLDECSNGTHQCSINAQCVNTPGSYRCACSEGFTGDGFTCS) constitute an EGF-like 23; calcium-binding domain. N-linked (GlcNAc...) asparagine glycosylation is present at Asn1414. The region spanning 1449–1490 (DVDECAENINLCENGQCLNVPGAYRCECEMGFTPASDSRSCQ) is the EGF-like 24; calcium-binding domain. In terms of domain architecture, EGF-like 25; calcium-binding spans 1491–1531 (DIDECSFQNICVFGTCNNLPGMFHCICDDGYELDRTGGNCT). Asn1529 carries N-linked (GlcNAc...) asparagine glycosylation. An EGF-like 26; calcium-binding domain is found at 1532–1572 (DIDECADPINCVNGLCVNTPGRYECNCPPDFQLNPTGVGCV). One can recognise a TB 6 domain in the interval 1577 to 1633 (GNCYLKFGPRGDGSLSCNTEIGVGVSRSSCCCSLGKAWGNPCETCPPVNSTEYYTLC). Asn1625 carries an N-linked (GlcNAc...) asparagine glycan. The region spanning 1650–1691 (DIDECQELPGLCQGGNCINTFGSFQCECPQGYYLSEDTRICE) is the EGF-like 27; calcium-binding domain. 6 cysteine pairs are disulfide-bonded: Cys1654-Cys1666, Cys1661-Cys1675, Cys1677-Cys1690, Cys1696-Cys1708, Cys1703-Cys1717, and Cys1719-Cys1732. Ser1672 carries an O-linked (Glc) serine glycan. The region spanning 1692–1733 (DIDECFAHPGVCGPGTCYNTLGNYTCICPPEYMQVNGGHNCM) is the EGF-like 28; calcium-binding domain. N-linked (GlcNAc...) asparagine glycosylation occurs at Asn1714. The tract at residues 1735–2171 (MRKSFCYRSY…VPSLHDTRED (437 aa)) is interaction with MFAP4. The region spanning 1738 to 1791 (SFCYRSYNGTTCENELPFNVTKRMCCCTYNVGKAWNKPCEPCPTPGTADFKTIC) is the TB 7 domain. Residues Asn1745 and Asn1756 are each glycosylated (N-linked (GlcNAc...) asparagine). Positions 1808–1849 (DIDECKEIPGICANGVCINQIGSFRCECPTGFSYNDLLLVCE) constitute an EGF-like 29; calcium-binding domain. Intrachain disulfides connect Cys1812/Cys1824, Cys1819/Cys1833, Cys1835/Cys1848, Cys1854/Cys1867, Cys1861/Cys1876, Cys1878/Cys1890, Cys1896/Cys1908, Cys1903/Cys1917, Cys1919/Cys1932, Cys1938/Cys1948, Cys1943/Cys1957, Cys1959/Cys1971, Cys1977/Cys1990, Cys1985/Cys1999, Cys2001/Cys2014, Cys2020/Cys2032, Cys2027/Cys2041, Cys2043/Cys2054, Cys2060/Cys2072, Cys2067/Cys2081, and Cys2083/Cys2096. An EGF-like 30; calcium-binding domain is found at 1850-1891 (DIDECSNGDNLCQRNADCINSPGSYRCECAAGFKLSPNGACV). Ser1873 carries O-linked (Glc) serine glycosylation. Residues 1892-1933 (DRNECLEIPNVCSHGLCVDLQGSYQCICHNGFKASQDQTMCM) form the EGF-like 31; calcium-binding domain. The EGF-like 32; calcium-binding domain maps to 1934-1972 (DVDECERHPCGNGTCKNTVGSYNCLCYPGFELTHNNDCL). A glycan (N-linked (GlcNAc...) asparagine) is linked at Asn1945. The O-linked (Glc) serine glycan is linked to Ser1954. Residues 1973–2015 (DIDECSSFFGQVCRNGRCFNEIGSFKCLCNEGYELTPDGKNCI) enclose the EGF-like 33; calcium-binding domain. The O-linked (Glc) serine glycan is linked to Ser1996. An EGF-like 34; calcium-binding domain is found at 2016–2055 (DTNECVALPGSCSPGTCQNLEGSFRCICPPGYEVKSENCI). The region spanning 2056–2097 (DINECDEDPNICLFGSCTNTPGGFQCLCPPGFVLSDNGRRCF) is the EGF-like 35; calcium-binding domain. Residues 2102–2155 (SFCFTNFENGKCSVPKAFNTTKAKCCCSKMPGEGWGDPCELCPKDDEVAFQDLC) enclose the TB 8 domain. The N-linked (GlcNAc...) asparagine glycan is linked to Asn2120. In terms of domain architecture, EGF-like 36; calcium-binding spans 2171–2212 (DVNECLESPGICSNGQCINTDGSFRCECPMGYNLDYTGVRCV). Disulfide bonds link Cys2175–Cys2187, Cys2182–Cys2196, Cys2198–Cys2211, Cys2217–Cys2228, Cys2223–Cys2237, Cys2239–Cys2251, Cys2257–Cys2268, Cys2264–Cys2277, Cys2279–Cys2292, Cys2298–Cys2312, Cys2305–Cys2321, Cys2323–Cys2336, Cys2342–Cys2354, Cys2349–Cys2363, and Cys2365–Cys2378. A glycan (O-linked (Glc) serine) is linked at Ser2193. Residues 2213–2252 (DTDECSIGNPCGNGTCTNVIGSFECNCNEGFEPGPMMNCE) form the EGF-like 37; calcium-binding domain. An N-linked (GlcNAc...) asparagine glycan is attached at Asn2225. The 41-residue stretch at 2253-2293 (DINECAQNPLLCAFRCMNTFGSYECTCPIGYALREDQKMCK) folds into the EGF-like 38; calcium-binding domain. An O-linked (Glc) serine glycan is attached at Ser2274. The region spanning 2294–2337 (DLDECAEGLHDCESRGMMCKNLIGTFMCICPPGMARRPDGEGCV) is the EGF-like 39; calcium-binding domain. The EGF-like 40; calcium-binding domain occupies 2338–2379 (DENECRTKPGICENGRCVNIIGSYRCECNEGFQSSSSGTECL). The O-linked (Glc) serine glycan is linked to Ser2360. The 54-residue stretch at 2384–2437 (GLCFAEVLQTICQMASSSRNLVTKSECCCDGGRGWGHQCELCPLPGTAQYKKIC) folds into the TB 9 domain. The EGF-like 41; calcium-binding domain maps to 2449 to 2490 (DIDECKVMPNLCTNGQCINTMGSFRCFCKVGYTTDISGTSCI). 21 disulfide bridges follow: Cys2453–Cys2465, Cys2460–Cys2474, Cys2476–Cys2489, Cys2495–Cys2506, Cys2502–Cys2515, Cys2517–Cys2530, Cys2536–Cys2547, Cys2543–Cys2556, Cys2558–Cys2569, Cys2575–Cys2588, Cys2582–Cys2597, Cys2599–Cys2612, Cys2618–Cys2628, Cys2624–Cys2637, Cys2639–Cys2652, Cys2658–Cys2669, Cys2664–Cys2678, Cys2680–Cys2693, Cys2699–Cys2710, Cys2706–Cys2719, and Cys2721–Cys2733. The O-linked (Glc) serine glycan is linked to Ser2471. In terms of domain architecture, EGF-like 42; calcium-binding spans 2491–2531 (DLDECSQSPKPCNYICKNTEGSYQCSCPRGYVLQEDGKTCK). An O-linked (Glc) serine glycan is attached at Ser2512. The EGF-like 43; calcium-binding domain occupies 2532-2570 (DLDECQTKQHNCQFLCVNTLGGFTCKCPPGFTQHHTACI). The EGF-like 44; calcium-binding domain maps to 2571-2613 (DNNECGSQPSLCGAKGICQNTPGSFSCECQRGFSLDATGLNCE). A glycan (O-linked (Glc) serine) is linked at Ser2594. An EGF-like 45; calcium-binding domain is found at 2614-2653 (DVDECDGNHRCQHGCQNILGGYRCGCPQGYIQHYQWNQCV). Residues 2654-2694 (DENECSNPNACGSASCYNTLGSYKCACPSGFSFDQFSSACH) enclose the EGF-like 46; calcium-binding domain. Ser2675 is a glycosylation site (O-linked (Glc) serine). The EGF-like 47; calcium-binding domain maps to 2695 to 2734 (DVNECSSSKNPCNYGCSNTEGGYLCGCPPGYYRVGQGHCV). The N-linked (GlcNAc...) asparagine glycan is linked to Asn2808.

The protein belongs to the fibrillin family. In terms of assembly, interacts with BMP2, BMP4, BMP7, BMP10 and GDF5. Interacts with MFAP2 and MFAP5. Interacts with ADAMTSL5. Interacts with MFAP4. In terms of processing, N-glycosylated. Post-translationally, O-glycosylated on serine residues by POGLUT2 and POGLUT3. Almost exclusively expressed in placenta. Expressed at much lower level in other tissues. Expressed in fetal eye (18 weeks)in the retinal pigment epithelium (RPE), the choroid, Bruch's membrane and in the sclera. Not expressed in the neural retina. As to expression, present at high level in cytotrophoblasts as compared with syncytiotrophoblasts at 8-9 weeks of pregnancy (at protein level). Levels in the serum increase during pregnancy (at protein level).

It is found in the secreted. The protein resides in the extracellular space. It localises to the extracellular matrix. Functionally, fibrillins are structural components of 10-12 nm extracellular calcium-binding microfibrils, which occur either in association with elastin or in elastin-free bundles. Fibrillin-2-containing microfibrils regulate the early process of elastic fiber assembly. Regulates osteoblast maturation by controlling TGF-beta bioavailability and calibrating TGF-beta and BMP levels, respectively. Hormone secreted by trophoblasts that promotes trophoblast invasiveness. Has glucogenic activity: is able to increase plasma glucose levels. The polypeptide is Fibrillin-2 (Homo sapiens (Human)).